Reading from the N-terminus, the 119-residue chain is Large ribosomal subunit protein uL18 (119 aa).

This sequence belongs to the universal ribosomal protein uL18 family. In terms of assembly, part of the 50S ribosomal subunit; part of the 5S rRNA/L5/L18/L25 subcomplex. Contacts the 5S and 23S rRNAs.

In terms of biological role, this is one of the proteins that bind and probably mediate the attachment of the 5S RNA into the large ribosomal subunit, where it forms part of the central protuberance. This is Large ribosomal subunit protein uL18 from Oceanobacillus iheyensis (strain DSM 14371 / CIP 107618 / JCM 11309 / KCTC 3954 / HTE831).